We begin with the raw amino-acid sequence, 202 residues long: Probable nicotinate-nucleotide adenylyltransferase (202 aa).

This sequence belongs to the NadD family.

It carries out the reaction nicotinate beta-D-ribonucleotide + ATP + H(+) = deamido-NAD(+) + diphosphate. The protein operates within cofactor biosynthesis; NAD(+) biosynthesis; deamido-NAD(+) from nicotinate D-ribonucleotide: step 1/1. Catalyzes the reversible adenylation of nicotinate mononucleotide (NaMN) to nicotinic acid adenine dinucleotide (NaAD). The polypeptide is Probable nicotinate-nucleotide adenylyltransferase (Clostridium perfringens (strain ATCC 13124 / DSM 756 / JCM 1290 / NCIMB 6125 / NCTC 8237 / Type A)).